Here is a 614-residue protein sequence, read N- to C-terminus: Chaperone protein DnaK (614 aa).

At T173 the chain carries Phosphothreonine; by autocatalysis. Composition is skewed to basic and acidic residues over residues 490-509 (EENAEADKKRREESDLRNEA) and 529-542 (EEDKQNAEDKKEAL). 3 disordered regions span residues 490–510 (EENAEADKKRREESDLRNEAD), 524–555 (GENISEEDKQNAEDKKEALKSALEGEDIDDIK), and 575–614 (QAAQAQQQAQGEDANASQDSNVEDADFKEVKDDDNQDNQK). A compositionally biased stretch (low complexity) spans 575–584 (QAAQAQQQAQ). Residues 599 to 614 (ADFKEVKDDDNQDNQK) are compositionally biased toward basic and acidic residues.

The protein belongs to the heat shock protein 70 family.

In terms of biological role, acts as a chaperone. The protein is Chaperone protein DnaK of Staphylococcus saprophyticus subsp. saprophyticus (strain ATCC 15305 / DSM 20229 / NCIMB 8711 / NCTC 7292 / S-41).